A 459-amino-acid chain; its full sequence is Cyclooctat-9-en-7-ol 5-monooxygenase (459 aa).

Residues 1 to 27 (MRERGPVTPAKSSAPPERPWTTGTAPG) are disordered. Residue C408 coordinates heme.

This sequence belongs to the cytochrome P450 family. Requires heme as cofactor.

It catalyses the reaction cyclooctat-9-en-7-ol + AH2 + O2 = cyclooctat-9-ene-5,7-diol + A + H2O. Its function is as follows. Involved in the biosynthesis of cyclooctatin, a potent inhibitor of lysophospholipase. Catalyzes the stereospecific hydroxylation of cyclooctat-9-en-7-ol to form cyclooctat-9-ene-5,7-diol. The polypeptide is Cyclooctat-9-en-7-ol 5-monooxygenase (Streptomyces melanosporofaciens).